A 488-amino-acid chain; its full sequence is UDP-glycosyltransferase 85A3 (488 aa).

Residues Ser-306, Cys-363–Gln-365, His-380–Glu-388, and Phe-402–Gln-405 each bind UDP-alpha-D-glucose.

The protein belongs to the UDP-glycosyltransferase family. Expressed in roots and flowers.

This Arabidopsis thaliana (Mouse-ear cress) protein is UDP-glycosyltransferase 85A3 (UGT85A3).